A 55-amino-acid polypeptide reads, in one-letter code: Large ribosomal subunit protein bL33 (55 aa).

It belongs to the bacterial ribosomal protein bL33 family.

This chain is Large ribosomal subunit protein bL33, found in Ruegeria sp. (strain TM1040) (Silicibacter sp.).